We begin with the raw amino-acid sequence, 82 residues long: Bowman-Birk type proteinase inhibitor (82 aa).

Positions 1 to 24 (SGHHDETTDEPSESSKPCCDQCSC) are disordered. Disulfide bonds link C18–C72, C19–C34, C22–C68, C24–C32, C42–C49, C46–C61, and C51–C59.

It belongs to the Bowman-Birk serine protease inhibitor family.

Functionally, trypsin and chymotrypsin are inhibited simultaneously. There are two separate reactive sites for trypsin and chymotrypsin but they do not inhibit simultaneously. The polypeptide is Bowman-Birk type proteinase inhibitor (Phaseolus angularis (Azuki bean)).